Consider the following 298-residue polypeptide: Mitochondrial dicarboxylate transporter (298 aa).

3 Solcar repeats span residues 11–95, 103–195, and 205–289; these read KNIK…LKEN, TNMA…FKNY, and SKNY…LKKH. The next 6 membrane-spanning stretches (helical) occupy residues 17 to 37, 58 to 76, 105 to 126, 170 to 189, 211 to 231, and 265 to 283; these read WWYGGAAGIFATMVTHPLDLA, ILANEGVVGLYSGLSAAVL, MAYLLPCSMFSGAIGGLAGNFA, GWKPNMVRGILMTASQVVTY, LTASLLAGLVATTVCSPADVM, and WLPSFTRLGPFTMLIFFAI.

It belongs to the mitochondrial carrier (TC 2.A.29) family. Homodimer. Binds to the TIM22 translocation complex during import.

Its subcellular location is the mitochondrion inner membrane. In terms of biological role, mitochondrial dicarboxylic transporter catalyzing the exchange of dicarboxylic acids like malate and succinate for inorganic phosphate. Required for growth on ethanol and acetate. This Saccharomyces cerevisiae (strain ATCC 204508 / S288c) (Baker's yeast) protein is Mitochondrial dicarboxylate transporter (DIC1).